The sequence spans 349 residues: uncharacterized protein (349 aa).

A compositionally biased stretch (polar residues) spans 116-135 (HFSQTNPKSTPEPPCTSSSG). The segment at 116–148 (HFSQTNPKSTPEPPCTSSSGAGDCHENLPADGY) is disordered.

This is an uncharacterized protein from Caenorhabditis elegans.